We begin with the raw amino-acid sequence, 130 residues long: Small ribosomal subunit protein uS9 (130 aa).

Belongs to the universal ribosomal protein uS9 family.

This is Small ribosomal subunit protein uS9 from Burkholderia mallei (strain NCTC 10247).